The sequence spans 399 residues: 3-dehydroquinate synthase (399 aa).

This sequence belongs to the archaeal-type DHQ synthase family.

It carries out the reaction 2-amino-2,3,7-trideoxy-D-lyxo-hept-6-ulosonate + NAD(+) + H2O = 3-dehydroquinate + NH4(+) + NADH + H(+). Catalyzes the oxidative deamination and cyclization of 2-amino-3,7-dideoxy-D-threo-hept-6-ulosonic acid (ADH) to yield 3-dehydroquinate (DHQ), which is fed into the canonical shikimic pathway of aromatic amino acid biosynthesis. The sequence is that of 3-dehydroquinate synthase from Haloquadratum walsbyi (strain DSM 16790 / HBSQ001).